The primary structure comprises 337 residues: F420-dependent glucose-6-phosphate dehydrogenase (337 aa).

Asp40 is a binding site for coenzyme F420-(gamma-Glu)n. The active-site Proton donor is His41. Coenzyme F420-(gamma-Glu)n contacts are provided by residues Thr77 and 108–109 (TG). The active-site Proton acceptor is the Glu110. Coenzyme F420-(gamma-Glu)n-binding positions include Asn113, 178–179 (GG), and 181–182 (VV). Substrate is bound by residues Thr196, Lys199, Lys260, and Arg284.

This sequence belongs to the F420-dependent glucose-6-phosphate dehydrogenase family. As to quaternary structure, homodimer.

The catalysed reaction is oxidized coenzyme F420-(gamma-L-Glu)(n) + D-glucose 6-phosphate + H(+) = 6-phospho-D-glucono-1,5-lactone + reduced coenzyme F420-(gamma-L-Glu)(n). In terms of biological role, catalyzes the coenzyme F420-dependent oxidation of glucose 6-phosphate (G6P) to 6-phosphogluconolactone. The chain is F420-dependent glucose-6-phosphate dehydrogenase from Rhodococcus hoagii (strain 103S) (Rhodococcus equi).